The chain runs to 354 residues: Trans-L-3-hydroxyproline dehydratase (354 aa).

Catalysis depends on C104, which acts as the Proton acceptor. Substrate contacts are provided by residues 105–106 (GH), D269, and 274–275 (GS).

This sequence belongs to the proline racemase family. In terms of assembly, homodimer.

It carries out the reaction trans-3-hydroxy-L-proline = 1-pyrroline-2-carboxylate + H2O. Catalyzes the dehydration of trans-3-hydroxy-L-proline to Delta(1)-pyrroline-2-carboxylate (Pyr2C). This chain is Trans-L-3-hydroxyproline dehydratase (L3HYPDH), found in Bos taurus (Bovine).